Consider the following 197-residue polypeptide: Ribonuclease HII (197 aa).

One can recognise an RNase H type-2 domain in the interval 11–197; it reads NLIAGVDEVG…FAPVRKILGL (187 aa). A divalent metal cation contacts are provided by D17, E18, and D109.

The protein belongs to the RNase HII family. It depends on Mn(2+) as a cofactor. The cofactor is Mg(2+).

It is found in the cytoplasm. It carries out the reaction Endonucleolytic cleavage to 5'-phosphomonoester.. Functionally, endonuclease that specifically degrades the RNA of RNA-DNA hybrids. The protein is Ribonuclease HII of Haemophilus ducreyi (strain 35000HP / ATCC 700724).